Consider the following 61-residue polypeptide: UPF0370 protein SG1720 (61 aa).

A helical transmembrane segment spans residues 3-23 (WLADYWWVVLLVLAGMLIGGV). Positions 37 to 47 (NRPELPPHRDN) are enriched in basic and acidic residues. The tract at residues 37–61 (NRPELPPHRDNNAQWDEEDDWPKKP) is disordered. The span at 51–61 (WDEEDDWPKKP) shows a compositional bias: acidic residues.

The protein belongs to the UPF0370 family.

The protein localises to the cell membrane. In Sodalis glossinidius (strain morsitans), this protein is UPF0370 protein SG1720.